Here is a 282-residue protein sequence, read N- to C-terminus: MILIDGKSLSKDLKERLATQVQEYKHHTAITPKLVAIIVGNDPASKTYVASKEKACAQVGIDSQVITLPEHTTESELLELIDQLNNDSSVHAILVQLPLPAHINKNNVIYSIKPEKDVDGFHPTNVGRLQLRDKKCLESCTPKGIMTMLREYGIKTEGAYVVVVGASNVVGKPVSQLLLNAKATVTTCHRFTTDLKSHTTKADILIVAVGKPNFITADMVKEGAVVIDVGINHVDGKIVGDVDFAAVKDKVAAITPVPGGVGPMTITELLYNTFQCAQELNR.

Residues 165–167 and I231 each bind NADP(+); that span reads GAS.

This sequence belongs to the tetrahydrofolate dehydrogenase/cyclohydrolase family. As to quaternary structure, homodimer.

The catalysed reaction is (6R)-5,10-methylene-5,6,7,8-tetrahydrofolate + NADP(+) = (6R)-5,10-methenyltetrahydrofolate + NADPH. The enzyme catalyses (6R)-5,10-methenyltetrahydrofolate + H2O = (6R)-10-formyltetrahydrofolate + H(+). Its pathway is one-carbon metabolism; tetrahydrofolate interconversion. Its function is as follows. Catalyzes the oxidation of 5,10-methylenetetrahydrofolate to 5,10-methenyltetrahydrofolate and then the hydrolysis of 5,10-methenyltetrahydrofolate to 10-formyltetrahydrofolate. The chain is Bifunctional protein FolD from Francisella tularensis subsp. holarctica (strain FTNF002-00 / FTA).